Reading from the N-terminus, the 497-residue chain is Early growth response protein 1-A (497 aa).

The segment covering 139 to 165 (SPSSAPSSSPSSSSSSSSSQSPPLSCS) has biased composition (low complexity). Disordered stretches follow at residues 139–169 (SPSSAPSSSPSSSSSSSSSQSPPLSCSVQSN), 175–194 (YSAAPTFPNSSSEIFPDHSP), and 286–309 (PSRMRKYPNRPSKTPPHERPYGCP). C2H2-type zinc fingers lie at residues 306-330 (YGCPVESCDRRFSRSDELTRHIRIH), 336-358 (FQCRICMRNFSRSDHLTTHIRTH), and 364-386 (FACDICGRKFARSDERKRHTKIH). Positions 377–441 (DERKRHTKIH…SYPSPVHSSF (65 aa)) are disordered. Basic residues predominate over residues 381 to 391 (RHTKIHLRQKD). A compositionally biased stretch (low complexity) spans 397 to 441 (ATPVSVASPVSSYSPSASTSYPSPVPTSYSSPVSSSYPSPVHSSF).

This sequence belongs to the EGR C2H2-type zinc-finger protein family. Expressed in the presumptive mesoderm. In blastula embryos, expressed in the dorsal marginal zone, and at the onset of gastrulation expression is specific to the Spemann organizer. As gastrulation proceeds, expressed in a ring around the yolk plug. This expression is maintained in advanced gastrulae, with weak expression also extending into the dorsal midline. By the neurula stage, expression is excluded from the notochord. In late tailbud stages, expressed in two spots in the anterior forebrain, which are connected via a bridge of cells that also show expression.

It is found in the nucleus. The protein localises to the cytoplasm. Its function is as follows. Transcriptional regulator. Recognizes and binds to the DNA sequence 5'-GCG(T/G)GGGCG-3'(EGR-site) in the promoter region of target genes. Binds double-stranded target DNA, irrespective of the cytosine methylation status. Regulates the transcription of numerous target genes, and thereby plays an important role in regulating the response to growth factors, DNA damage, and ischemia. Plays a role in the regulation of cell survival, proliferation and cell death. Mediates responses to ischemia and hypoxia; regulates the expression of proteins that are involved in inflammatory processes. Plays a role in regulating the expression of circadian clock genes. This is Early growth response protein 1-A (egr1-a) from Xenopus laevis (African clawed frog).